Here is a 126-residue protein sequence, read N- to C-terminus: Small ribosomal subunit protein uS11 (126 aa).

This sequence belongs to the universal ribosomal protein uS11 family. Part of the 30S ribosomal subunit.

Located on the platform of the 30S subunit. The protein is Small ribosomal subunit protein uS11 of Methanosarcina barkeri (strain Fusaro / DSM 804).